Reading from the N-terminus, the 212-residue chain is DNA-directed RNA polymerase III subunit RPC8 (212 aa).

Ser162 is subject to Phosphoserine. A compositionally biased stretch (basic and acidic residues) spans Arg166–Glu184. The tract at residues Arg166 to Tyr194 is disordered.

It belongs to the eukaryotic RPB7/RPC8 RNA polymerase subunit family. As to quaternary structure, component of the RNA polymerase III (Pol III) complex consisting of 17 subunits. RPC25/RPC8 and RPC17/RPC9 form a Pol III subcomplex.

It localises to the nucleus. DNA-dependent RNA polymerase catalyzes the transcription of DNA into RNA using the four ribonucleoside triphosphates as substrates. Specific peripheric component of RNA polymerase III which synthesizes small RNAs, such as 5S rRNA and tRNA. The RPC25/RPC8-RPC17/RPC9 subcomplex may bind Pol III transcripts emerging from the adjacent exit pore during elongation. In Saccharomyces cerevisiae (strain ATCC 204508 / S288c) (Baker's yeast), this protein is DNA-directed RNA polymerase III subunit RPC8 (RPC25).